The following is a 257-amino-acid chain: MNDIWWQTIGEGDCHLVLLHGWGLNAQVWDCITPQLASHFTLHLVDLPGYGRSGGFGAMSLEAMAQRVLEQAPPQAVWLGWSLGGLVASQVAIMRPERVQALVTVASSPCFAARDDWPGIKPEVLAGFQQQLSDDFQRTVERFLALQTMGTESARQDARALKQAVLSLPMPSAEALNGGLEILRTVDLRQALVRLPMPFLRLYGRLDGLVPRKIVPLLDDLWPESESILFDKAAHAPFVSHPAAFCEPLLALKTRLG.

The AB hydrolase-1 domain maps to 15–241 (HLVLLHGWGL…KAAHAPFVSH (227 aa)). Residues Trp-22, 82–83 (SL), and 143–147 (FLALQ) contribute to the substrate site. Ser-82 serves as the catalytic Nucleophile. Residues Asp-207 and His-235 contribute to the active site. His-235 is a substrate binding site.

It belongs to the AB hydrolase superfamily. Carboxylesterase BioH family. Monomer.

It localises to the cytoplasm. It catalyses the reaction 6-carboxyhexanoyl-[ACP] methyl ester + H2O = 6-carboxyhexanoyl-[ACP] + methanol + H(+). It participates in cofactor biosynthesis; biotin biosynthesis. The physiological role of BioH is to remove the methyl group introduced by BioC when the pimeloyl moiety is complete. It allows to synthesize pimeloyl-ACP via the fatty acid synthetic pathway through the hydrolysis of the ester bonds of pimeloyl-ACP esters. The polypeptide is Pimeloyl-[acyl-carrier protein] methyl ester esterase (Klebsiella pneumoniae subsp. pneumoniae (strain ATCC 700721 / MGH 78578)).